A 311-amino-acid chain; its full sequence is Putative pyruvate, phosphate dikinase regulatory protein (311 aa).

Position 180 to 187 (180 to 187) interacts with ADP; it reads GVSRSSKT.

This sequence belongs to the pyruvate, phosphate/water dikinase regulatory protein family. PDRP subfamily.

It carries out the reaction N(tele)-phospho-L-histidyl/L-threonyl-[pyruvate, phosphate dikinase] + ADP = N(tele)-phospho-L-histidyl/O-phospho-L-threonyl-[pyruvate, phosphate dikinase] + AMP + H(+). It catalyses the reaction N(tele)-phospho-L-histidyl/O-phospho-L-threonyl-[pyruvate, phosphate dikinase] + phosphate + H(+) = N(tele)-phospho-L-histidyl/L-threonyl-[pyruvate, phosphate dikinase] + diphosphate. Its function is as follows. Bifunctional serine/threonine kinase and phosphorylase involved in the regulation of the pyruvate, phosphate dikinase (PPDK) by catalyzing its phosphorylation/dephosphorylation. In Paramagnetospirillum magneticum (strain ATCC 700264 / AMB-1) (Magnetospirillum magneticum), this protein is Putative pyruvate, phosphate dikinase regulatory protein.